Here is a 332-residue protein sequence, read N- to C-terminus: DNA-directed RNA polymerase subunit alpha (332 aa).

The alpha N-terminal domain (alpha-NTD) stretch occupies residues 1 to 227; the sequence is MKKFAETPFL…VMYSQMSVFN (227 aa). The interval 248 to 332 is alpha C-terminal domain (alpha-CTD); sequence KELVIRIDDL…LRRKLEQLKA (85 aa).

Belongs to the RNA polymerase alpha chain family. Homodimer. The RNAP catalytic core consists of 2 alpha, 1 beta, 1 beta' and 1 omega subunit. When a sigma factor is associated with the core the holoenzyme is formed, which can initiate transcription.

The enzyme catalyses RNA(n) + a ribonucleoside 5'-triphosphate = RNA(n+1) + diphosphate. DNA-dependent RNA polymerase catalyzes the transcription of DNA into RNA using the four ribonucleoside triphosphates as substrates. This Aliarcobacter butzleri (strain RM4018) (Arcobacter butzleri) protein is DNA-directed RNA polymerase subunit alpha.